A 228-amino-acid chain; its full sequence is Sodium channel regulatory subunit beta-4 (228 aa).

Positions 1–30 (MSRAGNRGNTQARWLGTGLLGLFLLPMYLS) are cleaved as a signal peptide. The region spanning 31-148 (LEVSVGKATT…KDLNNSATIF (118 aa)) is the Ig-like C2-type domain. Residues 31-161 (LEVSVGKATT…VDKLEKVDNT (131 aa)) are Extracellular-facing. Residues asparagine 45, asparagine 71, asparagine 113, and asparagine 142 are each glycosylated (N-linked (GlcNAc...) asparagine). Cysteine 53 and cysteine 131 are oxidised to a cystine. Residues 162-182 (VTLIILAVVGGVIGLLVCILL) traverse the membrane as a helical segment. At 183-228 (LKKLITFILKKTREKKKECLVSSSGNDNTENGLPGSKAEEKPPTKV) the chain is on the cytoplasmic side. Residues 199–228 (KECLVSSSGNDNTENGLPGSKAEEKPPTKV) are disordered. Residues 203–213 (VSSSGNDNTEN) show a composition bias toward polar residues. Residues 219-228 (KAEEKPPTKV) are compositionally biased toward basic and acidic residues.

Belongs to the sodium channel auxiliary subunit SCN4B (TC 8.A.17) family. In terms of assembly, a voltage-gated sodium (Nav) channel consists of an ion-conducting pore-forming alpha subunit functional on its own that is regulated by one or more beta subunits. The beta subunit SCN4B is disulfide-linked to the pore-forming alpha subunit. Interacts with SCN1A; regulatory subunit of SCN1A/Nav1.1. Interacts with SCN2A; regulatory subunit of SCN2A/Nav1.2. Post-translationally, contains an interchain disulfide bond with SCN2A.

Its subcellular location is the cell membrane. In terms of biological role, regulatory subunit of multiple voltage-gated sodium (Nav) channels directly mediating the depolarization of excitable membranes. Navs, also called VGSCs (voltage-gated sodium channels) or VDSCs (voltage-dependent sodium channels), operate by switching between closed and open conformations depending on the voltage difference across the membrane. In the open conformation they allow Na(+) ions to selectively pass through the pore, along their electrochemical gradient. The influx of Na+ ions provokes membrane depolarization, initiating the propagation of electrical signals throughout cells and tissues. The accessory beta subunits participate in localization and functional modulation of the Nav channels. Modulates the activity of SCN1A/Nav1.1. Modulates the activity of SCN2A/Nav1.2. The chain is Sodium channel regulatory subunit beta-4 from Mus musculus (Mouse).